The primary structure comprises 400 residues: Cysteine desulfurase (400 aa).

Residues 71–72 (GT), Asn150, Gln178, and 198–200 (SGH) contribute to the pyridoxal 5'-phosphate site. Lys201 is subject to N6-(pyridoxal phosphate)lysine. Position 236 (Thr236) interacts with pyridoxal 5'-phosphate. The active-site Cysteine persulfide intermediate is the Cys324. Cys324 is a [2Fe-2S] cluster binding site.

Belongs to the class-V pyridoxal-phosphate-dependent aminotransferase family. NifS/IscS subfamily. In terms of assembly, homodimer. Pyridoxal 5'-phosphate is required as a cofactor.

It catalyses the reaction (sulfur carrier)-H + L-cysteine = (sulfur carrier)-SH + L-alanine. Its function is as follows. Catalyzes the removal of elemental sulfur atoms from cysteine to produce alanine. Seems to participate in the biosynthesis of the nitrogenase metalloclusters by providing the inorganic sulfur required for the Fe-S core formation. This is Cysteine desulfurase from Nostoc sp. (strain PCC 7120 / SAG 25.82 / UTEX 2576).